The following is an 845-amino-acid chain: Protein arginine N-methyltransferase 9 (845 aa).

TPR repeat units follow at residues 25–58 (VSRSLQSAEHCLGVQDFGTAYAHYLLVLSLAPEL), 67–100 (QYTLFRWAEELDALSRIQDLLGCYEQALELFPDD), and 101–134 (EVICNSMGEHLFRMGFRDEAAGYFHKAVKLNPDF). SAM-dependent MTase PRMT-type domains follow at residues 137–466 (AKEN…YLRI) and 530–845 (NIPY…TVKQ).

This sequence belongs to the class I-like SAM-binding methyltransferase superfamily. Protein arginine N-methyltransferase family. Found in a complex with PRMT9, SF3B2 and SF3B4. Interacts with SF3B2.

It is found in the cytoplasm. The catalysed reaction is L-arginyl-[protein] + 2 S-adenosyl-L-methionine = N(omega),N(omega)'-dimethyl-L-arginyl-[protein] + 2 S-adenosyl-L-homocysteine + 2 H(+). Functionally, arginine methyltransferase that can both catalyze the formation of omega-N monomethylarginine (MMA) and symmetrical dimethylarginine (sDMA). Specifically mediates the symmetrical dimethylation of SF3B2. Involved in the regulation of alternative splicing of pre-mRNA. This is Protein arginine N-methyltransferase 9 from Homo sapiens (Human).